We begin with the raw amino-acid sequence, 179 residues long: Guanosine-3',5'-bis(diphosphate) 3'-pyrophosphohydrolase MESH1 (179 aa).

G2 carries the N-acetylglycine modification. At K25 the chain carries N6-acetyllysine. Residues 32–127 enclose the HD domain; it reads YINHPIGVAR…VKLADKLYNL (96 aa). Residues H35, H61, and D62 each coordinate Mn(2+). Residues E65 and D66 each act as nucleophile in the active site. At K97 the chain carries N6-acetyllysine. D122 serves as a coordination point for Mn(2+). K123 carries the N6-acetyllysine modification.

It belongs to the MESH1 family. The cofactor is Mn(2+).

It catalyses the reaction guanosine 3',5'-bis(diphosphate) + H2O = GDP + diphosphate + H(+). Its function is as follows. ppGpp hydrolyzing enzyme involved in starvation response. The polypeptide is Guanosine-3',5'-bis(diphosphate) 3'-pyrophosphohydrolase MESH1 (Hddc3) (Mus musculus (Mouse)).